Consider the following 119-residue polypeptide: Large ribosomal subunit protein uL22c (119 aa).

Belongs to the universal ribosomal protein uL22 family. As to quaternary structure, part of the 50S ribosomal subunit.

It is found in the plastid. It localises to the chloroplast. Its function is as follows. This protein binds specifically to 23S rRNA. Functionally, the globular domain of the protein is located near the polypeptide exit tunnel on the outside of the subunit, while an extended beta-hairpin is found that lines the wall of the exit tunnel in the center of the 70S ribosome. The sequence is that of Large ribosomal subunit protein uL22c (rpl22) from Anthoceros angustus (Hornwort).